The sequence spans 278 residues: 4-deoxy-L-threo-5-hexosulose-uronate ketol-isomerase (278 aa).

Residues His-196, His-198, Glu-203, and His-245 each coordinate Zn(2+).

This sequence belongs to the KduI family. It depends on Zn(2+) as a cofactor.

The enzyme catalyses 5-dehydro-4-deoxy-D-glucuronate = 3-deoxy-D-glycero-2,5-hexodiulosonate. It functions in the pathway glycan metabolism; pectin degradation; 2-dehydro-3-deoxy-D-gluconate from pectin: step 4/5. Functionally, catalyzes the isomerization of 5-dehydro-4-deoxy-D-glucuronate to 3-deoxy-D-glycero-2,5-hexodiulosonate. This is 4-deoxy-L-threo-5-hexosulose-uronate ketol-isomerase from Paraburkholderia phytofirmans (strain DSM 17436 / LMG 22146 / PsJN) (Burkholderia phytofirmans).